The primary structure comprises 420 residues: DNA repair protein NreA (420 aa).

A PIP motif motif is present at residues 413-420; the sequence is QTDIFDFA.

Belongs to the Nre family. As to quaternary structure, interacts with the DNA polymerase sliding clamp (PCNA) via the PIP (PCNA-interacting peptide) motif.

Involved in DNA damage repair. Works together with the UvrABC proteins in repairing DNA damage resulting from exposure to the DNA damaging agent mitomycin C (MMC). The polypeptide is DNA repair protein NreA (Haloferax volcanii (strain ATCC 29605 / DSM 3757 / JCM 8879 / NBRC 14742 / NCIMB 2012 / VKM B-1768 / DS2) (Halobacterium volcanii)).